Here is a 254-residue protein sequence, read N- to C-terminus: Nickel import ATP-binding protein NikD (254 aa).

One can recognise an ABC transporter domain in the interval 2-241 (PQQIELRNIA…PKHAVTRSLV (240 aa)). 36–43 (GGSGSGKS) lines the ATP pocket.

Belongs to the ABC transporter superfamily. Nickel importer (TC 3.A.1.5.3) family. The complex is composed of two ATP-binding proteins (NikD and NikE), two transmembrane proteins (NikB and NikC) and a solute-binding protein (NikA).

Its subcellular location is the cell inner membrane. It carries out the reaction Ni(2+)(out) + ATP + H2O = Ni(2+)(in) + ADP + phosphate + H(+). In terms of biological role, part of the ABC transporter complex NikABCDE involved in nickel import. Responsible for energy coupling to the transport system. The polypeptide is Nickel import ATP-binding protein NikD (Escherichia coli O157:H7).